Here is a 469-residue protein sequence, read N- to C-terminus: MAKTLYEKLFDAHVVYEAAGETPILYINRHLIHEVTSPQAFDGLRVAGRQVRQIGKTFGTMDHSISTQVRDVNKLEGQAKIQVLELAKNCEANGISLFDMQTKEQGIVHVMGPEQGLTLPGMTIVCGDSHTATHGAFGALAFGIGTSEVEHVLATQTLKQARAKSMKVEVRGKVNPGITAKDIVLAIIGKTTMAGGTGHVVEFCGEAIRNLSMEGRMTVCNMAIEFGAKAGLVAPDETTFAYLKDRPHAPKGKDWDDAVEYWTTLKSDDDAVFDSVVVLEAKDIAPQVTWGTNPGQVIGIDQVVPNPQEMADPVTKASAEKALAYIGLDANTDMKNIPVDQVFIGSCTNSRIEDLRAAAAVMKGRKKADNVKRVLVVPGSGLVKEQAEKEGLDKIFIEAGAEWRNPGCSMCLGMNDDRLGEWERCASTSNRNFEGRQGRNGRTHLVSPAMAAAAAMFGKFVDIRHVELN.

[4Fe-4S] cluster contacts are provided by Cys347, Cys408, and Cys411.

The protein belongs to the aconitase/IPM isomerase family. LeuC type 1 subfamily. Heterodimer of LeuC and LeuD. [4Fe-4S] cluster is required as a cofactor.

It carries out the reaction (2R,3S)-3-isopropylmalate = (2S)-2-isopropylmalate. Its pathway is amino-acid biosynthesis; L-leucine biosynthesis; L-leucine from 3-methyl-2-oxobutanoate: step 2/4. Its function is as follows. Catalyzes the isomerization between 2-isopropylmalate and 3-isopropylmalate, via the formation of 2-isopropylmaleate. This Actinobacillus pleuropneumoniae serotype 5b (strain L20) protein is 3-isopropylmalate dehydratase large subunit.